A 255-amino-acid polypeptide reads, in one-letter code: uncharacterized protein (255 aa).

The protein belongs to the IIV-6 155L family.

This is an uncharacterized protein from Acheta domesticus (House cricket).